The primary structure comprises 207 residues: Ras-related protein Rab7 (207 aa).

GTP-binding positions include 15–22 (GDSSVGKT), 34–40 (SNQYKAT), 63–67 (DTAGQ), 125–128 (NKVD), and 156–157 (AK). Residues 37–45 (YKATIGADF) carry the Effector region motif. Residues Cys-205 and Cys-207 are each lipidated (S-geranylgeranyl cysteine).

The protein belongs to the small GTPase superfamily. Rab family. In terms of tissue distribution, expressed in eye (at protein level).

It is found in the early endosome membrane. The protein resides in the late endosome membrane. Its subcellular location is the lysosome membrane. The protein localises to the cytoplasmic vesicle. It localises to the autophagosome membrane. It is found in the autolysosome membrane. The protein resides in the presynapse. Its subcellular location is the perikaryon. It carries out the reaction GTP + H2O = GDP + phosphate + H(+). In terms of biological role, small GTPase which cycles between active GTP-bound and inactive GDP-bound states. In its active state, binds to a variety of effector proteins playing a key role in the regulation of endo-lysosomal trafficking. Involved in microtubule minus and plus end-directed endosomal migration and positioning, and endosome-lysosome transport through different protein-protein interaction cascades. Governs early-to-late endosomal to lysosomal maturation. Controls endocytic cargo sorting towards the late endosome facilitating its eventual endolysosomal-mediated degradation. Together with Rab2 involved in promoting fusion of autophagosomes and endosomes with lysosomes probably through recruitment of the HOPS tethering complex. Involved in biosynthetic transport to lysosomes. Involved in establishing morphogen concentration gradients, for example of the TGF-beta homolog dpp/decapentaplegic, during pattern formation and organogenesis. Together with the Mon1-Ccz1 complex, required for autolysosome formation in fat cells and autophagic degradation during starvation-induced basal and developmental autophagy. Together with Mon1, regulates levels of postsynaptic glutamate receptor GluRIIA in the neuromuscular junction (NMJ) presynapse. Required for autophagocytosis-dependent remodeling of myofibrils and transverse-tubules (T-tubules) during metamorphosis. Involved in intracellular trafficking of the carbohydrate transporter Tret1 in glial cells of the blood brain barrier, influencing its subcellular localization and protein levels. This chain is Ras-related protein Rab7, found in Drosophila melanogaster (Fruit fly).